The chain runs to 400 residues: NADH-quinone oxidoreductase subunit D (400 aa).

The protein belongs to the complex I 49 kDa subunit family. In terms of assembly, NDH-1 is composed of 14 different subunits. Subunits NuoB, C, D, E, F, and G constitute the peripheral sector of the complex.

The protein localises to the cell inner membrane. It carries out the reaction a quinone + NADH + 5 H(+)(in) = a quinol + NAD(+) + 4 H(+)(out). Its function is as follows. NDH-1 shuttles electrons from NADH, via FMN and iron-sulfur (Fe-S) centers, to quinones in the respiratory chain. The immediate electron acceptor for the enzyme in this species is believed to be a menaquinone. Couples the redox reaction to proton translocation (for every two electrons transferred, four hydrogen ions are translocated across the cytoplasmic membrane), and thus conserves the redox energy in a proton gradient. The chain is NADH-quinone oxidoreductase subunit D from Chlorobium chlorochromatii (strain CaD3).